A 640-amino-acid chain; its full sequence is Pleckstrin homology-like domain family B member 3 (640 aa).

5 disordered regions span residues 1 to 100 (MGTR…AARR), 162 to 189 (LEQQAASEQRGRQQREQEQRRLSQERDR), 241 to 262 (LERESRQEEEDRDSPGPQVPDP), 387 to 412 (GLQRTGSLPRKRGERGSQRGSPRPLS), and 476 to 504 (REGTRRGTEGSSGPAVPAITAPPTPPHPP). The segment covering 76–90 (PPIAMAATPPASTSS) has biased composition (low complexity). Residues 104-327 (QQLEALTRVA…ERSRLLELNC (224 aa)) adopt a coiled-coil conformation. Over residues 170–189 (QRGRQQREQEQRRLSQERDR) the composition is skewed to basic and acidic residues. Residues 454–481 (DIAHMERLLQQAMAERERLLKAREGTRR) adopt a coiled-coil conformation. The span at 495 to 504 (TAPPTPPHPP) shows a compositional bias: pro residues. One can recognise a PH domain in the interval 532-635 (GCCCRGPLVK…WMDVIVTAAD (104 aa)).

The chain is Pleckstrin homology-like domain family B member 3 (PHLDB3) from Homo sapiens (Human).